The following is a 1071-amino-acid chain: Carbamoyl phosphate synthase large chain (1071 aa).

Residues 1 to 403 are carboxyphosphate synthetic domain; it reads MPKRTDLKSI…SFQKALRGLE (403 aa). ATP is bound by residues R129, R169, G175, G176, Q208, V210, E215, G241, V242, H243, Q285, and E299. One can recognise an ATP-grasp 1 domain in the interval 133-328; it reads KEAMEKIGLS…IAKVAAKLAV (196 aa). Mg(2+)-binding residues include Q285, E299, and N301. 3 residues coordinate Mn(2+): Q285, E299, and N301. An oligomerization domain region spans residues 404 to 548; the sequence is TGLCGFNPRS…YSTYEEECEA (145 aa). Residues 549-930 are carbamoyl phosphate synthetic domain; it reads RPSDRKKVMI…AYYKAQLGAG (382 aa). Positions 673 to 864 constitute an ATP-grasp 2 domain; the sequence is QKVLNDLGLR…LAKVGARCMA (192 aa). ATP-binding residues include R709, F748, L750, E755, G780, I781, H782, S783, Q823, and E835. The Mg(2+) site is built by Q823, E835, and N837. 3 residues coordinate Mn(2+): Q823, E835, and N837. The MGS-like domain maps to 931 to 1071; it reads ERLNPTGKIF…ELHGRLKNRS (141 aa). The tract at residues 931–1071 is allosteric domain; that stretch reads ERLNPTGKIF…ELHGRLKNRS (141 aa).

This sequence belongs to the CarB family. Composed of two chains; the small (or glutamine) chain promotes the hydrolysis of glutamine to ammonia, which is used by the large (or ammonia) chain to synthesize carbamoyl phosphate. Tetramer of heterodimers (alpha,beta)4. Requires Mg(2+) as cofactor. It depends on Mn(2+) as a cofactor.

The catalysed reaction is hydrogencarbonate + L-glutamine + 2 ATP + H2O = carbamoyl phosphate + L-glutamate + 2 ADP + phosphate + 2 H(+). The enzyme catalyses hydrogencarbonate + NH4(+) + 2 ATP = carbamoyl phosphate + 2 ADP + phosphate + 2 H(+). It participates in amino-acid biosynthesis; L-arginine biosynthesis; carbamoyl phosphate from bicarbonate: step 1/1. It functions in the pathway pyrimidine metabolism; UMP biosynthesis via de novo pathway; (S)-dihydroorotate from bicarbonate: step 1/3. Large subunit of the glutamine-dependent carbamoyl phosphate synthetase (CPSase). CPSase catalyzes the formation of carbamoyl phosphate from the ammonia moiety of glutamine, carbonate, and phosphate donated by ATP, constituting the first step of 2 biosynthetic pathways, one leading to arginine and/or urea and the other to pyrimidine nucleotides. The large subunit (synthetase) binds the substrates ammonia (free or transferred from glutamine from the small subunit), hydrogencarbonate and ATP and carries out an ATP-coupled ligase reaction, activating hydrogencarbonate by forming carboxy phosphate which reacts with ammonia to form carbamoyl phosphate. The polypeptide is Carbamoyl phosphate synthase large chain (Neisseria meningitidis serogroup A / serotype 4A (strain DSM 15465 / Z2491)).